The primary structure comprises 1434 residues: DNA-directed RNA polymerase subunit beta (1434 aa).

It belongs to the RNA polymerase beta chain family. In terms of assembly, the RNAP catalytic core consists of 2 alpha, 1 beta, 1 beta' and 1 omega subunit. When a sigma factor is associated with the core the holoenzyme is formed, which can initiate transcription.

It carries out the reaction RNA(n) + a ribonucleoside 5'-triphosphate = RNA(n+1) + diphosphate. DNA-dependent RNA polymerase catalyzes the transcription of DNA into RNA using the four ribonucleoside triphosphates as substrates. This chain is DNA-directed RNA polymerase subunit beta, found in Ureaplasma parvum serovar 3 (strain ATCC 27815 / 27 / NCTC 11736).